A 591-amino-acid polypeptide reads, in one-letter code: CTP synthase 1 (591 aa).

The 255-residue stretch at Ser300 to Tyr554 folds into the Glutamine amidotransferase type-1 domain. Catalysis depends on for GATase activity residues Cys399, His526, and Glu528. Phosphoserine occurs at positions 571 and 575.

It belongs to the CTP synthase family.

The enzyme catalyses UTP + L-glutamine + ATP + H2O = CTP + L-glutamate + ADP + phosphate + 2 H(+). The protein operates within pyrimidine metabolism; CTP biosynthesis via de novo pathway; CTP from UDP: step 2/2. Its function is as follows. This enzyme is involved in the de novo synthesis of CTP, a precursor of DNA, RNA and phospholipids. Catalyzes the ATP-dependent amination of UTP to CTP with either L-glutamine or ammonia as a source of nitrogen. This Danio rerio (Zebrafish) protein is CTP synthase 1 (ctps1).